A 128-amino-acid chain; its full sequence is Class I hydrophobin 19 (128 aa).

4 cysteine pairs are disulfide-bonded: cysteine 48–cysteine 107, cysteine 55–cysteine 101, cysteine 56–cysteine 88, and cysteine 108–cysteine 121. N-linked (GlcNAc...) asparagine glycosylation is present at asparagine 110.

The protein belongs to the fungal hydrophobin family. Self-assembles to form functional amyloid fibrils called rodlets. Self-assembly into fibrillar rodlets occurs spontaneously at hydrophobic:hydrophilic interfaces and the rodlets further associate laterally to form amphipathic monolayers.

It localises to the secreted. The protein localises to the cell wall. Its function is as follows. Aerial growth, conidiation, and dispersal of filamentous fungi in the environment rely upon a capability of their secreting small amphipathic proteins called hydrophobins (HPBs) with low sequence identity. Class I can self-assemble into an outermost layer of rodlet bundles on aerial cell surfaces, conferring cellular hydrophobicity that supports fungal growth, development and dispersal; whereas Class II form highly ordered films at water-air interfaces through intermolecular interactions but contribute nothing to the rodlet structure. In Pleurotus ostreatus (strain PC15) (Oyster mushroom), this protein is Class I hydrophobin 19.